A 559-amino-acid chain; its full sequence is Frizzled-1 (559 aa).

The signal sequence occupies residues 1–35; it reads MKHSHLLQRCSAQLCTRGSSLILSLLLSVCLSVEG. Residues 36 to 239 lie on the Extracellular side of the membrane; that stretch reads QYNGEKGISI…FAPEELNFAR (204 aa). The FZ domain maps to 46–165; the sequence is PDHGYCQPIS…NGAGELCVGQ (120 aa). 5 disulfides stabilise this stretch: Cys-51-Cys-112, Cys-59-Cys-105, Cys-96-Cys-133, Cys-122-Cys-162, and Cys-126-Cys-150. N-linked (GlcNAc...) asparagine glycosylation is present at Asn-65. An N-linked (GlcNAc...) asparagine glycan is attached at Asn-166. Residues 240–260 form a helical membrane-spanning segment; it reads IWIGIWSVLCCASTLFTVLTY. The Cytoplasmic portion of the chain corresponds to 261–273; the sequence is LVDMKRFSYPERP. A helical membrane pass occupies residues 274 to 294; it reads IIFLSGCYTMVAIAYIAGFLL. Topologically, residues 295-321 are extracellular; the sequence is EDKVVCNERFAEDGYKTVAQGTKKEGC. The helical transmembrane segment at 322 to 342 threads the bilayer; sequence TFLFMMLYFFSMASSIWWVIL. The Cytoplasmic segment spans residues 343–364; sequence SLTWFLAAGMKWGHEAIEANSQ. Residues 365 to 385 form a helical membrane-spanning segment; the sequence is YFHLAAWAVPAIKTITILAVG. Over 386–408 the chain is Extracellular; sequence QVDGDTLSGVCFVGINNVDALRG. Residues 409–429 form a helical membrane-spanning segment; that stretch reads FVLAPLFVYLFIGTSFLLAGF. The Cytoplasmic portion of the chain corresponds to 430 to 455; it reads VSLFRIRTIMKHDGTKTEKLEKLMVR. A helical membrane pass occupies residues 456 to 476; it reads IGIFSVLYTVPATIVIACYFY. The Extracellular segment spans residues 477–513; it reads EQAFREQWEKSWISQSCKTYAIPCPSTGHPPMSPDFT. A helical membrane pass occupies residues 514–534; it reads VFMIKYLMTLIVGITSGFWIW. Over 535-559 the chain is Cytoplasmic; the sequence is SGKTLNSWRKFYTRLTNSKQGETTV. The short motif at 537–542 is the Lys-Thr-X-X-X-Trp motif, mediates interaction with the PDZ domain of Dvl family members element; the sequence is KTLNSW. A PDZ-binding motif is present at residues 557 to 559; that stretch reads TTV.

Belongs to the G-protein coupled receptor Fz/Smo family. As to quaternary structure, interacts with wnt8. As to expression, in the embryo, expressed in the heart, pronephros and otic vesicles.

It is found in the cell membrane. Functionally, receptor for Wnt proteins. Functions in the canonical Wnt/beta-catenin signaling pathway. The canonical Wnt/beta-catenin signaling pathway leads to the activation of disheveled proteins, inhibition of GSK-3 kinase, nuclear accumulation of beta-catenin and activation of Wnt target genes. A second signaling pathway involving PKC and calcium fluxes has been seen for some family members, but it is not yet clear if it represents a distinct pathway or if it can be integrated in the canonical pathway, as PKC seems to be required for Wnt-mediated inactivation of GSK-3 kinase. Both pathways seem to involve interactions with G-proteins. May be involved in transduction and intercellular transmission of polarity information during tissue morphogenesis and/or in differentiated tissues. This Xenopus laevis (African clawed frog) protein is Frizzled-1 (fzd1).